A 149-amino-acid polypeptide reads, in one-letter code: Oligosaccharyltransferase complex subunit OSTC (149 aa).

The Cytoplasmic segment spans residues 1 to 32 (METLYRVPFLVLECPNLKLKKPPWVHMPSAMT). Residues 33–53 (VYALVVVSYFLITGGIIYDVI) traverse the membrane as a helical segment. Topologically, residues 54–83 (VEPPSVGSMTDEHGHQRPVAFLAYRVNGQY) are extracellular. Residues 84-104 (IMEGLASSFLFTMGGLGFIIL) form a helical membrane-spanning segment. The Cytoplasmic portion of the chain corresponds to 105-117 (DRSNAPNIPKLNR). The helical transmembrane segment at 118 to 138 (FLLLFIGFVCVLLSFFMARVF) threads the bilayer. At 139-149 (MRMKLPGYLMG) the chain is on the extracellular side.

Belongs to the OSTC family. Component of STT3A-containing oligosaccharyl transferase (OST-A) complex. STT3A-containing complex assembly occurs through the formation of 3 subcomplexes. Subcomplex 1 contains RPN1 and TMEM258, subcomplex 2 contains the STT3A-specific subunits STT3A, DC2/OSTC, and KCP2 as well as the core subunit OST4, and subcomplex 3 contains RPN2, DAD1, and OST48. The OST-A complex can form stable complexes with the Sec61 complex or with both the Sec61 and TRAP complexes. Interacts with PSEN1 and NCSTN; indicative for an association with the gamma-secretase complex.

It is found in the endoplasmic reticulum. The protein resides in the membrane. It participates in protein modification; protein glycosylation. Its function is as follows. Subunit of STT3A-containing oligosaccharyl transferase (OST-A) complex that catalyzes the initial transfer of a defined glycan (Glc(3)Man(9)GlcNAc(2) in eukaryotes) from the lipid carrier dolichol-pyrophosphate to an asparagine residue within an Asn-X-Ser/Thr consensus motif in nascent polypeptide chains, the first step in protein N-glycosylation. N-glycosylation occurs cotranslationally and the complex associates with the Sec61 complex at the channel-forming translocon complex that mediates protein translocation across the endoplasmic reticulum (ER). Within the OST-A complex, acts as an adapter that anchors the OST-A complex to the Sec61 complex. May be involved in N-glycosylation of APP (amyloid-beta precursor protein). Can modulate gamma-secretase cleavage of APP by enhancing endoprotelysis of PSEN1. The protein is Oligosaccharyltransferase complex subunit OSTC of Canis lupus familiaris (Dog).